Here is a 215-residue protein sequence, read N- to C-terminus: DNA polymerase III subunit epsilon (215 aa).

Positions 19 and 21 each coordinate a divalent metal cation. Residues Asp19, Glu21, Asp62, and Asn67 each contribute to the substrate site. Residue His160 is the Proton acceptor of the active site. Position 165 (Asp165) interacts with a divalent metal cation. Residue Asp165 participates in substrate binding.

As to quaternary structure, DNA polymerase III contains a core (composed of alpha, epsilon and theta chains) that associates with a tau subunit. This core dimerizes to form the POLIII' complex. PolIII' associates with the gamma complex (composed of gamma, delta, delta', psi and chi chains) and with the beta chain to form the complete DNA polymerase III complex. The cofactor is Mg(2+). It depends on Mn(2+) as a cofactor.

The catalysed reaction is DNA(n) + a 2'-deoxyribonucleoside 5'-triphosphate = DNA(n+1) + diphosphate. Functionally, DNA polymerase III is a complex, multichain enzyme responsible for most of the replicative synthesis in bacteria. The epsilon subunit contain the editing function and is a proofreading 3'-5' exonuclease. The chain is DNA polymerase III subunit epsilon (dnaQ) from Treponema pallidum (strain Nichols).